Consider the following 1461-residue polypeptide: Regulation of nuclear pre-mRNA domain-containing protein 2 (1461 aa).

The residue at position 2 (Ala2) is an N-acetylalanine. Residue Ser16 is modified to Phosphoserine. One can recognise a CID domain in the interval 19–149 (SAGALESSLD…ALREALSTTF (131 aa)). 2 disordered regions span residues 311–438 (STLP…TSLS) and 469–504 (NTGV…TTSH). The segment covering 352–368 (ESEKSATPEPVTDNRDV) has biased composition (basic and acidic residues). Ser356 is modified (phosphoserine). Position 358 is a phosphothreonine (Thr358). Residues 369–378 (EDMELSDVED) are compositionally biased toward acidic residues. Residue Ser374 is modified to Phosphoserine. Positions 379 to 394 (DGSKIIVEDRKEKPAE) are enriched in basic and acidic residues. The span at 397–416 (AVSTSVPTKPTENISKASSC) shows a compositional bias: polar residues. Low complexity-rich tracts occupy residues 417–426 (TPVPVTMTAT) and 473–491 (SPAS…NLTS). A phosphoserine mark is found at Ser473, Ser476, and Ser479. Thr482 carries the post-translational modification Phosphothreonine. At Ser485 the chain carries Phosphoserine. Position 517 is a phosphothreonine (Thr517). The segment at 547 to 623 (TGNPVPASEA…SPGLPSTTFK (77 aa)) is disordered. A compositionally biased stretch (low complexity) spans 553–566 (ASEAASQSTSASPA). Ser564 bears the Phosphoserine mark. Polar residues predominate over residues 567–583 (NTTVSTIKGRNLPSSAQ). Ser593 carries the phosphoserine modification. Positions 593–614 (SPNSSTSEVSSTSASKASIGQS) are enriched in low complexity. Thr598 is modified (phosphothreonine). Phosphoserine occurs at positions 614, 663, 665, and 716. Disordered regions lie at residues 696 to 849 (GSSA…MMNL), 900 to 997 (SENC…EKVL), 1016 to 1102 (ASRK…SGEP), 1132 to 1312 (STSG…APPL), and 1340 to 1461 (FGVL…PPRY). Thr723 bears the Phosphothreonine mark. A Phosphoserine modification is found at Ser730. Thr732 is subject to Phosphothreonine. The span at 742-752 (PTSSSVDTMSL) shows a compositional bias: polar residues. Ser758 and Ser762 each carry phosphoserine. A compositionally biased stretch (low complexity) spans 758-768 (SPGSSTPSSTR). Phosphothreonine is present on Thr763. Ser769, Ser817, Ser826, Ser900, Ser909, Ser928, Ser965, and Ser976 each carry phosphoserine. The segment covering 927–954 (RSPSPSKNDSFFTPDSNHNSLSQSTTGH) has biased composition (polar residues). The segment covering 1031 to 1055 (SKGTPSDGVSLSNLTQPSLTATDQQ) has biased composition (polar residues). Phosphoserine is present on residues Ser1068 and Ser1099. Low complexity predominate over residues 1141-1150 (GPSSASELAS). A compositionally biased stretch (gly residues) spans 1151-1160 (LGGGGSGGLT). Polar residues predominate over residues 1174 to 1189 (FQESVGSFRSNSFNST). Composition is skewed to pro residues over residues 1267 to 1277 (FPTPPPPPPPG) and 1290 to 1299 (STPPPPPPPV). The residue at position 1366 (Arg1366) is an Asymmetric dimethylarginine. Residues 1382-1391 (PHGGGGGGGS) show a composition bias toward gly residues. Residues 1417–1434 (PRPDFRPREPFLSRDPFH) show a composition bias toward basic and acidic residues. Residues Arg1424 and Arg1430 each carry the asymmetric dimethylarginine modification.

Associates with the RNA polymerase II complex.

The sequence is that of Regulation of nuclear pre-mRNA domain-containing protein 2 (RPRD2) from Homo sapiens (Human).